We begin with the raw amino-acid sequence, 300 residues long: ATP-dependent (S)-NAD(P)H-hydrate dehydratase (300 aa).

In terms of domain architecture, YjeF C-terminal spans 6–297 (YAGKIKEFIP…GCIHQSFTSL (292 aa)). (6S)-NADPHX-binding positions include G106 and 158–164 (NEVEFKR). Residues 188-192 (KGSTD) and 218-227 (GSNRRCGGQG) each bind ATP. Position 228 (D228) interacts with (6S)-NADPHX.

The protein belongs to the NnrD/CARKD family. It depends on Mg(2+) as a cofactor.

The enzyme catalyses (6S)-NADHX + ATP = ADP + phosphate + NADH + H(+). It carries out the reaction (6S)-NADPHX + ATP = ADP + phosphate + NADPH + H(+). Catalyzes the dehydration of the S-form of NAD(P)HX at the expense of ATP, which is converted to ADP. Together with NAD(P)HX epimerase, which catalyzes the epimerization of the S- and R-forms, the enzyme allows the repair of both epimers of NAD(P)HX, a damaged form of NAD(P)H that is a result of enzymatic or heat-dependent hydration. The chain is ATP-dependent (S)-NAD(P)H-hydrate dehydratase from Pediculus humanus subsp. corporis (Body louse).